A 489-amino-acid chain; its full sequence is Metal cation symporter ZIP14 (489 aa).

Residues 1–28 form the signal peptide; the sequence is MKRLHPALPSCLLLVLFGIWRTAPQTHA. Residues 29-155 lie on the Extracellular side of the membrane; the sequence is SSAGLPPLSA…PSAIEVWGYG (127 aa). N-linked (GlcNAc...) asparagine glycosylation is found at Asn-52, Asn-75, Asn-85, and Asn-100. A helical membrane pass occupies residues 156–176; that stretch reads FLCVTVISLCSLMGASVVPFM. Topologically, residues 177–184 are cytoplasmic; that stretch reads KKTFYKRL. The chain crosses the membrane as a helical span at residues 185-205; sequence LLYFIALAIGTLYSNALFQLI. Over 206–221 the chain is Extracellular; it reads PEAFGFNPQDNYVSKS. The chain crosses the membrane as a helical span at residues 222-242; that stretch reads AVVFGGFYLFFFTEKILKMLL. At 243–349 the chain is on the cytoplasmic side; that stretch reads KQKNEHHHGH…SDGLHNFIDG (107 aa). The HHHGHXHX-motif motif lies at 248-255; that stretch reads HHHGHNHF. The chain crosses the membrane as a helical span at residues 350-370; it reads LAIGASFTVSVFQGISTSVAI. Topologically, residues 371–394 are extracellular; that stretch reads LCEEFPHELGDFVILLNAGMSIQQ. The short motif at 373–378 is the XEXPHE-motif element; the sequence is EEFPHE. A helical membrane pass occupies residues 395–415; sequence ALFFNFLSACCCYLGLAFGIL. Topologically, residues 416–421 are cytoplasmic; sequence AGSHFS. The helical transmembrane segment at 422 to 442 threads the bilayer; sequence ANWIFALAGGMFLYIALADMF. Over 443 to 457 the chain is Extracellular; the sequence is PEMNEVCQEDEKNDS. A helical membrane pass occupies residues 458-478; sequence FLVPFVIQNLGLLTGFSIMLV. Over 479–489 the chain is Cytoplasmic; sequence LTMYSGQIQIG.

Belongs to the ZIP transporter (TC 2.A.5) family. In terms of assembly, homotrimer. Ubiquitinated. Ubiquitination occurs upon iron depletion. The ubiquitinated form undergoes proteasomal degradation. Post-translationally, N-glycosylated. N-glycosylation at Asn-100 is required for iron-regulated extraction of the transporter from membranes and subsequent proteasomal degradation. In terms of tissue distribution, widely expressed. Highly and transiently expressed during the early stage of adipocyte differentiation. Strongly expressed in liver, preadipocyte, duodenum and jejunum, moderately in brain, heart, skeletal muscle, spleen, pancreas, kidney and white adipose cells. Expression is almost undetectable in lung, testis and brown adipose cells. Expressed by chondrocytes and pituitary cells. More strongly expressed in brain. As to expression, more strongly expressed in liver, kidney and duodenum.

It is found in the cell membrane. It localises to the apical cell membrane. The protein localises to the basolateral cell membrane. Its subcellular location is the early endosome membrane. The protein resides in the late endosome membrane. It is found in the lysosome membrane. The enzyme catalyses Zn(2+)(out) + 2 hydrogencarbonate(out) = Zn(2+)(in) + 2 hydrogencarbonate(in). It carries out the reaction Mn(2+)(out) + 2 hydrogencarbonate(out) = Mn(2+)(in) + 2 hydrogencarbonate(in). It catalyses the reaction Fe(2+)(out) + 2 hydrogencarbonate(out) = Fe(2+)(in) + 2 hydrogencarbonate(in). The catalysed reaction is Cd(2+)(out) + 2 hydrogencarbonate(out) = Cd(2+)(in) + 2 hydrogencarbonate(in). Inhibited by cyanide and therefore dependent of an energy source. Inhibited by DIDS/4,4'-diisothiocyanatostilbene-2,2'-disulfonic acid, an inhibitor hydrogencarbonate-dependent transporters. Its function is as follows. Electroneutral transporter of the plasma membrane mediating the cellular uptake of the divalent metal cations zinc, manganese and iron that are important for tissue homeostasis, metabolism, development and immunity. Functions as an energy-dependent symporter, transporting through the membranes an electroneutral complex composed of a divalent metal cation and two bicarbonate anions. Beside these endogenous cellular substrates, can also import cadmium a non-essential metal which is cytotoxic and carcinogenic. Controls the cellular uptake by the intestinal epithelium of systemic zinc, which is in turn required to maintain tight junctions and the intestinal permeability. Modifies the activity of zinc-dependent phosphodiesterases, thereby indirectly regulating G protein-coupled receptor signaling pathways important for gluconeogenesis and chondrocyte differentiation. Regulates insulin receptor signaling, glucose uptake, glycogen synthesis and gluconeogenesis in hepatocytes through the zinc-dependent intracellular catabolism of insulin. Through zinc cellular uptake also plays a role in the adaptation of cells to endoplasmic reticulum stress. Major manganese transporter of the basolateral membrane of intestinal epithelial cells, it plays a central role in manganese systemic homeostasis through intestinal manganese uptake. Also involved in manganese extracellular uptake by cells of the blood-brain barrier. May also play a role in manganese and zinc homeostasis participating in their elimination from the blood through the hepatobiliary excretion. Also functions in the extracellular uptake of free iron. May also function intracellularly and mediate the transport from endosomes to cytosol of iron endocytosed by transferrin. Plays a role in innate immunity by regulating the expression of cytokines by activated macrophages. This Mus musculus (Mouse) protein is Metal cation symporter ZIP14.